A 465-amino-acid polypeptide reads, in one-letter code: Clusterin-like protein 1 (465 aa).

A signal peptide spans 1–20; that stretch reads MKPSLLVFTVYLLWLKDCHC. The stretch at 62 to 106 forms a coiled coil; the sequence is MMERREEEHTNLMKTLKKCKEEKQEALKLMNEVQEHLEEEESLCQ. 4 disulfide bridges follow: C105-C333, C116-C325, C119-C322, and C124-C315. N-linked (GlcNAc...) asparagine glycosylation is found at N196, N257, N285, N311, N351, N412, and N430.

Belongs to the clusterin family. In terms of tissue distribution, retina-specific (at protein level). In the light-adapted retina, expressed in the outer segment of cone photoreceptors. In the dark-adapted retina, strongly expressed in the outer plexiform layer in the region of contact between the cone pedicles and second order neurons with little or no expression in the cone photoreceptor outer segments.

Its subcellular location is the secreted. The sequence is that of Clusterin-like protein 1 (CLUL1) from Canis lupus familiaris (Dog).